Here is an 852-residue protein sequence, read N- to C-terminus: Major vault protein (852 aa).

9 MVP repeats span residues 2–54 (EDSI…IPPR), 55–109 (HYCV…VATA), 110–161 (LQVV…CWIN), 162–214 (AIVI…DVVN), 215–269 (AFIL…GQVE), 270–320 (VTTL…IQDT), 321–377 (YVLS…YRHA), 378–457 (IPLD…PTRV), and 458–520 (VTFR…LLGP).

The vault ribonucleoprotein particle is a huge (400 A x 670 A) cage structure of 12.9 MDa. It consists of a dimer of half-vaults, with each half-vault comprising 39 identical major vault protein (MVP) chains, PARP4 and one or more vault RNAs (vRNAs). As to expression, expression is highest in brain and enriched in the electric lobe. Closely associated with synaptic vesicles in the nerve terminals of the electric organ.

It is found in the cytoplasm. The protein resides in the nucleus. In terms of biological role, required for normal vault structure. Vaults are multi-subunit structures that may act as scaffolds for proteins involved in signal transduction. Vaults may also play a role in nucleo-cytoplasmic transport. The chain is Major vault protein (MVP) from Diplobatis ommata (Ocellated electric ray).